Consider the following 234-residue polypeptide: Filarial antigen Av33 (234 aa).

The N-terminal stretch at 1–17 is a signal peptide; that stretch reads MKILSCLLLCTITVLEG. A disulfide bridge links cysteine 135 with cysteine 230. Positions 204–234 are disordered; it reads TSQASEATTIPTTTQTPVEAPETPSFCVPIY. A compositionally biased stretch (low complexity) spans 211-220; it reads TTIPTTTQTP.

Belongs to the protease inhibitor I33 family.

The protein resides in the secreted. Its function is as follows. Aspartyl protease inhibitor. The sequence is that of Filarial antigen Av33 from Acanthocheilonema viteae (Filarial nematode worm).